The following is a 458-amino-acid chain: Probable alpha-L-glutamate ligase (458 aa).

The segment at 1-162 is unknown; sequence MSDNKFIIGS…YGVKSAKKSG (162 aa). The interval 163 to 458 is alpha-L-glutamate ligase; sequence LKIGLLASNP…IEKKLGWKAE (296 aa). An ATP-grasp domain is found at 267–450; it reads LQLLQKNNLD…IAGAMIDSIE (184 aa). ATP is bound by residues lysine 304, 341–342, aspartate 350, and 374–376; these read EF and RAN. Mg(2+) contacts are provided by aspartate 411, glutamate 423, and asparagine 425. Residues aspartate 411, glutamate 423, and asparagine 425 each contribute to the Mn(2+) site.

It in the C-terminal section; belongs to the RimK family. Mg(2+) is required as a cofactor. The cofactor is Mn(2+).

In Shewanella halifaxensis (strain HAW-EB4), this protein is Probable alpha-L-glutamate ligase.